A 255-amino-acid chain; its full sequence is DASH complex subunit SPC34 (255 aa).

Residues 53-81 form a disordered region; it reads LFSVPPPPPRQTTLTAEQQQQQKPSNRRQ. The span at 63–81 shows a compositional bias: polar residues; sequence QTTLTAEQQQQQKPSNRRQ. Residues 176–248 are a coiled coil; sequence LAYYEAKIAE…QARLRALDAD (73 aa).

Belongs to the DASH complex SPC34 family. As to quaternary structure, component of the DASH complex consisting of ASK1, DAD1, DAD2, DAD3, DAD4, DAM1, DUO1, HSK3, SPC19 and SPC34, with a stoichiometry of one copy of each subunit per complex. Multiple DASH complexes oligomerize to form a ring that encircles spindle microtubules and organizes the rod-like NDC80 complexes of the outer kinetochore of the outer kinetochore. DASH complex oligomerization strengthens microtubule attachments. On cytoplasmic microtubules, DASH complexes appear to form patches instead of rings.

The protein localises to the nucleus. The protein resides in the cytoplasm. It localises to the cytoskeleton. It is found in the spindle. Its subcellular location is the chromosome. The protein localises to the centromere. The protein resides in the kinetochore. In terms of biological role, component of the DASH complex that connects microtubules with kinetochores and couples microtubule depolymerisation to chromosome movement; it is involved in retrieving kinetochores to the spindle poles before their re-orientation on the spindle in early mitosis and allows microtubule depolymerization to pull chromosomes apart and resist detachment during anaphase. Kinetochores, consisting of a centromere-associated inner segment and a microtubule-contacting outer segment, play a crucial role in chromosome segregation by mediating the physical connection between centromeric DNA and microtubules. Kinetochores also serve as an input point for the spindle assembly checkpoint, which delays anaphase until all chromosomes have bioriented on the mitotic spindle. In Chaetomium thermophilum (strain DSM 1495 / CBS 144.50 / IMI 039719) (Thermochaetoides thermophila), this protein is DASH complex subunit SPC34.